The sequence spans 256 residues: UPF0246 protein HRM2_41860 (256 aa).

It belongs to the UPF0246 family.

In Desulforapulum autotrophicum (strain ATCC 43914 / DSM 3382 / VKM B-1955 / HRM2) (Desulfobacterium autotrophicum), this protein is UPF0246 protein HRM2_41860.